The following is a 161-amino-acid chain: DNA-binding protein inhibitor ID-4 (161 aa).

The bHLH domain occupies 52 to 104; it reads AAEAAADEPALCLQCDMNDCYSRLRRLVPTIPPNKKVSKVEILQHVIDYILDL. A compositionally biased stretch (pro residues) spans 117–126; that stretch reads QPPPPAPPHH. Residues 117–161 are disordered; it reads QPPPPAPPHHPAGTCPAAPPRTPLTALNTDPAGAVNKQGDSILCR.

Heterodimer with other HLH proteins.

The protein resides in the nucleus. Its function is as follows. Transcriptional regulator (lacking a basic DNA binding domain) which negatively regulates the basic helix-loop-helix (bHLH) transcription factors by forming heterodimers and inhibiting their DNA binding and transcriptional activity. Implicated in regulating a variety of cellular processes, including cellular growth, senescence, differentiation, apoptosis, angiogenesis, and neoplastic transformation. This Homo sapiens (Human) protein is DNA-binding protein inhibitor ID-4 (ID4).